We begin with the raw amino-acid sequence, 231 residues long: Protein OPG061 (231 aa).

Belongs to the orthopoxvirus OPG058 family.

It localises to the host nucleus. It is found in the host nucleolus. This is Protein OPG061 (OPG061) from Homo sapiens (Human).